Consider the following 170-residue polypeptide: Putative pre-16S rRNA nuclease (170 aa).

Belongs to the YqgF nuclease family.

Its subcellular location is the cytoplasm. Its function is as follows. Could be a nuclease involved in processing of the 5'-end of pre-16S rRNA. The chain is Putative pre-16S rRNA nuclease from Synechococcus sp. (strain JA-2-3B'a(2-13)) (Cyanobacteria bacterium Yellowstone B-Prime).